Reading from the N-terminus, the 256-residue chain is Thiazole synthase (256 aa).

Lys95 (schiff-base intermediate with DXP) is an active-site residue. 1-deoxy-D-xylulose 5-phosphate-binding positions include Gly156, 182-183 (AG), and 204-205 (NT).

It belongs to the ThiG family. As to quaternary structure, homotetramer. Forms heterodimers with either ThiH or ThiS.

The protein localises to the cytoplasm. It carries out the reaction [ThiS sulfur-carrier protein]-C-terminal-Gly-aminoethanethioate + 2-iminoacetate + 1-deoxy-D-xylulose 5-phosphate = [ThiS sulfur-carrier protein]-C-terminal Gly-Gly + 2-[(2R,5Z)-2-carboxy-4-methylthiazol-5(2H)-ylidene]ethyl phosphate + 2 H2O + H(+). It participates in cofactor biosynthesis; thiamine diphosphate biosynthesis. Functionally, catalyzes the rearrangement of 1-deoxy-D-xylulose 5-phosphate (DXP) to produce the thiazole phosphate moiety of thiamine. Sulfur is provided by the thiocarboxylate moiety of the carrier protein ThiS. In vitro, sulfur can be provided by H(2)S. This chain is Thiazole synthase, found in Shigella boydii serotype 18 (strain CDC 3083-94 / BS512).